The chain runs to 149 residues: Large ribosomal subunit protein uL13 (149 aa).

It belongs to the universal ribosomal protein uL13 family. As to quaternary structure, part of the 50S ribosomal subunit.

Its function is as follows. This protein is one of the early assembly proteins of the 50S ribosomal subunit, although it is not seen to bind rRNA by itself. It is important during the early stages of 50S assembly. The sequence is that of Large ribosomal subunit protein uL13 from Bifidobacterium longum (strain DJO10A).